The primary structure comprises 328 residues: Ketol-acid reductoisomerase (NADP(+)) (328 aa).

The 180-residue stretch at 2–181 (AKIYRETDAD…GFTRVGVIET (180 aa)) folds into the KARI N-terminal Rossmann domain. NADP(+)-binding positions include 25-28 (YGIQ), R48, S52, and 82-85 (DMVQ). H107 is a catalytic residue. G133 serves as a coordination point for NADP(+). Residues 182 to 327 (TFAEETETDL…EDLRRLMRSG (146 aa)) enclose the KARI C-terminal knotted domain. 4 residues coordinate Mg(2+): D190, E194, E226, and E230. Position 251 (S251) interacts with substrate.

It belongs to the ketol-acid reductoisomerase family. Mg(2+) is required as a cofactor.

The catalysed reaction is (2R)-2,3-dihydroxy-3-methylbutanoate + NADP(+) = (2S)-2-acetolactate + NADPH + H(+). It carries out the reaction (2R,3R)-2,3-dihydroxy-3-methylpentanoate + NADP(+) = (S)-2-ethyl-2-hydroxy-3-oxobutanoate + NADPH + H(+). Its pathway is amino-acid biosynthesis; L-isoleucine biosynthesis; L-isoleucine from 2-oxobutanoate: step 2/4. It participates in amino-acid biosynthesis; L-valine biosynthesis; L-valine from pyruvate: step 2/4. Involved in the biosynthesis of branched-chain amino acids (BCAA). Catalyzes an alkyl-migration followed by a ketol-acid reduction of (S)-2-acetolactate (S2AL) to yield (R)-2,3-dihydroxy-isovalerate. In the isomerase reaction, S2AL is rearranged via a Mg-dependent methyl migration to produce 3-hydroxy-3-methyl-2-ketobutyrate (HMKB). In the reductase reaction, this 2-ketoacid undergoes a metal-dependent reduction by NADPH to yield (R)-2,3-dihydroxy-isovalerate. This Caldivirga maquilingensis (strain ATCC 700844 / DSM 13496 / JCM 10307 / IC-167) protein is Ketol-acid reductoisomerase (NADP(+)).